The following is a 154-amino-acid chain: Ribonuclease H (154 aa).

Residues 1–142 (MLKHIDLYTD…CDELARDAAS (142 aa)) enclose the RNase H type-1 domain. The Mg(2+) site is built by Asp10, Glu48, Asp70, and Asp134. The segment covering 126-147 (GHPENERCDELARDAASGKELA) has biased composition (basic and acidic residues). The interval 126-154 (GHPENERCDELARDAASGKELAEDTGYQP) is disordered.

This sequence belongs to the RNase H family. Monomer. The cofactor is Mg(2+).

The protein localises to the cytoplasm. The enzyme catalyses Endonucleolytic cleavage to 5'-phosphomonoester.. Functionally, endonuclease that specifically degrades the RNA of RNA-DNA hybrids. The polypeptide is Ribonuclease H (Aeromonas salmonicida (strain A449)).